We begin with the raw amino-acid sequence, 279 residues long: Protein K1 (279 aa).

Positions methionine 1–serine 18 are cleaved as a signal peptide. At leucine 19–leucine 220 the chain is on the extracellular side. The helical transmembrane segment at valine 221 to phenylalanine 241 threads the bilayer. Over alanine 242–tyrosine 279 the chain is Cytoplasmic.

In terms of assembly, homooligomer.

It localises to the host membrane. Functionally, promotes host cell survival pathways and may contribute to pathogenesis by preventing infected cells from undergoing apoptosis. Acts in host B-cells by mimicking the activated B-cell receptor complex. The cytoplasmic tail of K1 can induce the phosphorylation of a number of different kinases, leading to the activation of survival signaling pathways. This chain is Protein K1 (K1), found in Human herpesvirus 8 type P (isolate GK18) (HHV-8).